Consider the following 25-residue polypeptide: Flagellar filament core protein flaB1 (25 aa).

This sequence belongs to the bacterial flagellin family. The flagellum consists of an outer layer composed of two sheath proteins, flaA1 (44 kDa) and flaA2 (35 kDa) around a core that contains three proteins flaB1 (37 kDa), flaB2 (34 kDa) and flaB3 (32 kDa).

Its subcellular location is the periplasmic flagellum. It localises to the periplasm. Functionally, component of the core of the flagella. The sequence is that of Flagellar filament core protein flaB1 (flaB1) from Brachyspira hyodysenteriae (Treponema hyodysenteriae).